The sequence spans 919 residues: Sarcosine dehydrogenase, mitochondrial (919 aa).

The transit peptide at Met-1–Asn-22 directs the protein to the mitochondrion. Lys-38 is modified (N6-succinyllysine). The residue at position 109 (His-109) is a Tele-8alpha-FAD histidine. Lys-174 carries the N6-acetyllysine; alternate modification. Position 174 is an N6-succinyllysine; alternate (Lys-174). Lys-278, Lys-378, Lys-392, and Lys-535 each carry N6-succinyllysine. Lys-560 and Lys-776 each carry N6-acetyllysine. Tyr-778 is subject to Phosphotyrosine. N6-acetyllysine; alternate is present on residues Lys-803, Lys-885, and Lys-905. 3 positions are modified to N6-succinyllysine; alternate: Lys-803, Lys-885, and Lys-905.

It belongs to the GcvT family. Requires FAD as cofactor.

The protein localises to the mitochondrion matrix. The enzyme catalyses (6S)-5,6,7,8-tetrahydrofolyl-(gamma-L-Glu)(n) + sarcosine + oxidized [electron-transfer flavoprotein] + H(+) = (6R)-5,10-methylenetetrahydrofolyl-(gamma-L-Glu)(n) + reduced [electron-transfer flavoprotein] + glycine. The protein operates within amine and polyamine degradation; sarcosine degradation; formaldehyde and glycine from sarcosine: step 1/1. Its function is as follows. Catalyzes the last step of the oxidative degradation of choline to glycine. Converts sarcosine into glycine. This is Sarcosine dehydrogenase, mitochondrial from Mus musculus (Mouse).